A 1521-amino-acid polypeptide reads, in one-letter code: Protein dispatched homolog 1 (1521 aa).

Residues 1–10 (MAVISGSDSV) are compositionally biased toward polar residues. The interval 1–55 (MAVISGSDSVLLSNGSISTSTSNPSPLSPSDGDLPAQHLGPRETPRTKASPNGCL) is disordered. The span at 11-35 (LLSNGSISTSTSNPSPLSPSDGDLP) shows a compositional bias: low complexity. Residues N14 and N58 are each glycosylated (N-linked (GlcNAc...) asparagine). Residues 189 to 209 (VVVLGMCTLLIVVCALVGVLV) form a helical membrane-spanning segment. N390 is a glycosylation site (N-linked (GlcNAc...) asparagine). An SSD domain is found at 485–657 (GIEFGIKHSL…VTWLPAVIVL (173 aa)). A run of 3 helical transmembrane segments spans residues 499-519 (LLMDTVYPAIAIAIVLLIMCV), 524-544 (MFITLMTMFAIISSLIVSYFL), and 548-568 (VFNFEFFPFMNLTALIILVGI). N-linked (GlcNAc...) asparagine glycosylation is present at N581. The next 8 helical transmembrane spans lie at 603–623 (AALSMFVTSFTTAAAFYANYV), 637–657 (GTAILVNYVLMVTWLPAVIVL), 717–737 (YLWLIWFLALTVGGAYIVCVN), 986–1006 (MGLSVAVAFSVMLLTTWNIII), 1008–1028 (LYAIVSIAGTIFVTVGSLVLL), 1038–1058 (VTISVAVGLSVDFAVHYGVAY), 1081–1101 (IAMAALTTFVAGAMMMPSTVL), and 1109–1129 (FMMLVMCVSWAFATFFFQCLC). Composition is skewed to polar residues over residues 1355–1364 (QENLGRTSTH) and 1418–1428 (TKSKVSGLPNQ). Residues 1355–1440 (QENLGRTSTH…KEEKQVEPSL (86 aa)) are disordered. Residue N1455 is glycosylated (N-linked (GlcNAc...) asparagine).

The protein belongs to the dispatched family. As to quaternary structure, interacts with SHH; via the cholesterol anchor of the dually lipid-modified SHH (ShhNp).

It localises to the membrane. Functions in hedgehog (Hh) signaling. Regulates the release and extracellular accumulation of cholesterol-modified hedgehog proteins and is hence required for effective production of the Hh signal. Synergizes with SCUBE2 to cause an increase in SHH secretion. The sequence is that of Protein dispatched homolog 1 (Disp1) from Mus musculus (Mouse).